The chain runs to 205 residues: Ribonuclease HII (205 aa).

The 188-residue stretch at 14 to 201 (EIVAGVDEAG…KGNINHSAIL (188 aa)) folds into the RNase H type-2 domain. The a divalent metal cation site is built by Asp-20, Glu-21, and Asp-111.

The protein belongs to the RNase HII family. Mn(2+) serves as cofactor. It depends on Mg(2+) as a cofactor.

It localises to the cytoplasm. It catalyses the reaction Endonucleolytic cleavage to 5'-phosphomonoester.. In terms of biological role, endonuclease that specifically degrades the RNA of RNA-DNA hybrids. This is Ribonuclease HII from Orientia tsutsugamushi (strain Boryong) (Rickettsia tsutsugamushi).